Consider the following 325-residue polypeptide: uncharacterized protein (325 aa).

This sequence belongs to the mgp1/MG371 family.

This is an uncharacterized protein from Mycoplasma pneumoniae (strain ATCC 29342 / M129 / Subtype 1) (Mycoplasmoides pneumoniae).